Consider the following 98-residue polypeptide: Large ribosomal subunit protein uL23 (98 aa).

The protein belongs to the universal ribosomal protein uL23 family. Part of the 50S ribosomal subunit. Contacts protein L29, and trigger factor when it is bound to the ribosome.

One of the early assembly proteins it binds 23S rRNA. One of the proteins that surrounds the polypeptide exit tunnel on the outside of the ribosome. Forms the main docking site for trigger factor binding to the ribosome. The chain is Large ribosomal subunit protein uL23 from Cereibacter sphaeroides (strain ATCC 17025 / ATH 2.4.3) (Rhodobacter sphaeroides).